The following is a 484-amino-acid chain: Cobyric acid synthase (484 aa).

In terms of domain architecture, GATase cobBQ-type spans 249–438 (QLRVAVPVFT…LHGIFDRPET (190 aa)). Residue Cys-330 is the Nucleophile of the active site. His-430 is an active-site residue.

The protein belongs to the CobB/CobQ family. CobQ subfamily.

It functions in the pathway cofactor biosynthesis; adenosylcobalamin biosynthesis. Its function is as follows. Catalyzes amidations at positions B, D, E, and G on adenosylcobyrinic A,C-diamide. NH(2) groups are provided by glutamine, and one molecule of ATP is hydrogenolyzed for each amidation. The sequence is that of Cobyric acid synthase from Vibrio cholerae serotype O1 (strain ATCC 39541 / Classical Ogawa 395 / O395).